A 236-amino-acid chain; its full sequence is UPF0257 lipoprotein YnfC (236 aa).

The signal sequence occupies residues 1-16; that stretch reads MKKPLLLTLLCMILAG. Residue C17 is the site of N-palmitoyl cysteine attachment. Residue C17 is the site of S-diacylglycerol cysteine attachment.

Belongs to the UPF0257 family.

Its subcellular location is the cell membrane. The chain is UPF0257 lipoprotein YnfC from Salmonella dublin (strain CT_02021853).